Consider the following 523-residue polypeptide: Mitochondrial distribution and morphology protein 34 (523 aa).

In terms of domain architecture, SMP-LTD spans 1–200 (MSFKVNWKSL…LPTLIHQFSL (200 aa)). The tract at residues 489–523 (ELSMDRSGKRKQRNYGSATYESENPIVAPPPPYSH) is disordered.

This sequence belongs to the MDM34 family. In terms of assembly, component of the ER-mitochondria encounter structure (ERMES) or MDM complex, composed of MMM1, MDM10, MDM12 and MDM34.

It is found in the mitochondrion outer membrane. Its function is as follows. Component of the ERMES/MDM complex, which serves as a molecular tether to connect the endoplasmic reticulum (ER) and mitochondria. Components of this complex are involved in the control of mitochondrial shape and protein biogenesis, and function in nonvesicular lipid trafficking between the ER and mitochondria. MDM34 is required for the interaction of the ER-resident membrane protein MMM1 and the outer mitochondrial membrane-resident beta-barrel protein MDM10. In Scheffersomyces stipitis (strain ATCC 58785 / CBS 6054 / NBRC 10063 / NRRL Y-11545) (Yeast), this protein is Mitochondrial distribution and morphology protein 34.